A 203-amino-acid polypeptide reads, in one-letter code: Ras-like protein family member 10B (203 aa).

A small GTPase-like region spans residues 1 to 203 (MVSTYRVAVL…ALRRNRCAIM (203 aa)). A GTP-binding site is contributed by 11–18 (GARGVGKS). The short motif at 33–42 (CVPTTARRLY) is the Effector region element. GTP is bound by residues 59–62 (DFPP) and 128–131 (NKRD). C200 is modified (cysteine methyl ester). C200 is lipidated: S-geranylgeranyl cysteine. The propeptide at 201–203 (AIM) is removed in mature form.

It belongs to the small GTPase superfamily. Ras family. As to quaternary structure, interacts with CADPS. Expressed at high levels in skeletal muscle and, at much lower levels, in heart, brain and pancreas.

It localises to the cell membrane. It carries out the reaction GTP + H2O = GDP + phosphate + H(+). Functionally, may facilitate the release of atrial natriuretic peptide by cardiomyocytes and hence play a role in the regulation of arterial pressure. The sequence is that of Ras-like protein family member 10B (RASL10B) from Homo sapiens (Human).